We begin with the raw amino-acid sequence, 118 residues long: Large ribosomal subunit protein uL18 (118 aa).

The segment at 1–20 (MISKPDKNKKRQRRHARVRS) is disordered. A compositionally biased stretch (basic residues) spans 7 to 20 (KNKKRQRRHARVRS).

Belongs to the universal ribosomal protein uL18 family. Part of the 50S ribosomal subunit; part of the 5S rRNA/L5/L18/L25 subcomplex. Contacts the 5S and 23S rRNAs.

Functionally, this is one of the proteins that bind and probably mediate the attachment of the 5S RNA into the large ribosomal subunit, where it forms part of the central protuberance. This chain is Large ribosomal subunit protein uL18, found in Pediococcus pentosaceus (strain ATCC 25745 / CCUG 21536 / LMG 10740 / 183-1w).